A 427-amino-acid polypeptide reads, in one-letter code: Putative F-box/FBD/LRR-repeat protein At4g13965 (427 aa).

One can recognise an F-box domain in the interval 13–61 (ADRISQLPEALIIQILSLLPTEVAVTTSVLSKQWQFLWKMLPKLNFDSL). 6 LRR repeats span residues 67–93 (FKTFSKNVKRALLSHKAPVLHSLHLIV), 98–122 (CNSMNTAKLIGIAFACNLRKLVLEV), 141–168 (TLELKYSILMDVPSSICLKSLRTLHLHY), 169–194 (VDFKDNESALNLLSGCPNLENLVVHR), 213–241 (LTIYTSSTVDPRAGYVINSPSLTYLKIVG), and 258–284 (SMIVSSQIINKNLLESLTSVKRLFLEF). The 51-residue stretch at 346–396 (KWNKPKIVPECLLFHLETFMWKGYEWKRNDETEVAKYILSNTNRLKRATFF) folds into the FBD domain.

The sequence is that of Putative F-box/FBD/LRR-repeat protein At4g13965 from Arabidopsis thaliana (Mouse-ear cress).